The following is a 126-amino-acid chain: Small ribosomal subunit protein uS13 (126 aa).

Residues 95 to 126 (GLPVRGQRTQTNARTRKGKKKTVAGKKKAGRK) are disordered. The segment covering 108 to 126 (RTRKGKKKTVAGKKKAGRK) has biased composition (basic residues).

This sequence belongs to the universal ribosomal protein uS13 family. In terms of assembly, part of the 30S ribosomal subunit. Forms a loose heterodimer with protein S19. Forms two bridges to the 50S subunit in the 70S ribosome.

Located at the top of the head of the 30S subunit, it contacts several helices of the 16S rRNA. In the 70S ribosome it contacts the 23S rRNA (bridge B1a) and protein L5 of the 50S subunit (bridge B1b), connecting the 2 subunits; these bridges are implicated in subunit movement. Contacts the tRNAs in the A and P-sites. The chain is Small ribosomal subunit protein uS13 from Thermobifida fusca (strain YX).